The primary structure comprises 126 residues: Transcription antitermination protein NusB (126 aa).

It belongs to the NusB family.

In terms of biological role, involved in transcription antitermination. Required for transcription of ribosomal RNA (rRNA) genes. Binds specifically to the boxA antiterminator sequence of the ribosomal RNA (rrn) operons. The protein is Transcription antitermination protein NusB of Oceanobacillus iheyensis (strain DSM 14371 / CIP 107618 / JCM 11309 / KCTC 3954 / HTE831).